Consider the following 630-residue polypeptide: tRNA uridine 5-carboxymethylaminomethyl modification enzyme MnmG (630 aa).

Position 13-18 (13-18 (GGGHAG)) interacts with FAD. NAD(+) is bound at residue 273 to 287 (GPRYCPSIEDKIHRF).

This sequence belongs to the MnmG family. As to quaternary structure, homodimer. Heterotetramer of two MnmE and two MnmG subunits. The cofactor is FAD.

The protein localises to the cytoplasm. In terms of biological role, NAD-binding protein involved in the addition of a carboxymethylaminomethyl (cmnm) group at the wobble position (U34) of certain tRNAs, forming tRNA-cmnm(5)s(2)U34. In Pseudomonas aeruginosa (strain ATCC 15692 / DSM 22644 / CIP 104116 / JCM 14847 / LMG 12228 / 1C / PRS 101 / PAO1), this protein is tRNA uridine 5-carboxymethylaminomethyl modification enzyme MnmG.